Consider the following 97-residue polypeptide: Pyrin domain-containing protein 2 (97 aa).

Residues 1–94 enclose the Pyrin domain; that stretch reads MASSAELDFN…SGRADEHCVM (94 aa).

As to quaternary structure, interacts with PYCARD/ASC (via pyrin domain). Interacts with NLRP2 (via pyrin domain). In terms of tissue distribution, predominantly expressed in peripheral blood. Weakly expressed in testis.

The protein localises to the cytoplasm. It is found in the nucleus. Its function is as follows. May play a role in innate immunity by disrupting the interaction between PYCARD and NLRP3, thereby regulating the NLRP3 inflammasome. May also inhibit NF-kappa-B signaling distally by affecting the nuclear accumulation of RELA. This chain is Pyrin domain-containing protein 2, found in Homo sapiens (Human).